A 367-amino-acid chain; its full sequence is MSLADSVLAVNNDLPIRTNSPVHSGKVRSVYWLTDADSRRLIQTKGYNVPEDTPLAIMVISDRISAFDCIFHGEGGLKGIPGKGAALNAISNHWFKLFAENGLADSHILDIPHPFVWIVQKARPIKVEAICRQYITGSMWRAYSKGERVFCGITLPEGLEKDQKLPDLLITPSTKGILTGIPGVPAQDDVNISRADIEANYQAFGFEKVEDIDLYEKLLKDGFKVISKALADLDQVFVDTKFEFGYVTDKNGNSKLIYMDEVGTPDSSRIWDGAAYRDGKILENSKEGFRQFLLNHFPDPDILLNKDRMPEREALARDNALPLEAMMNVSRTYTGIAEKVTGAAIPLPANPKADIIKILREEYDLIV.

Belongs to the SAICAR synthetase family.

The enzyme catalyses 5-amino-1-(5-phospho-D-ribosyl)imidazole-4-carboxylate + L-aspartate + ATP = (2S)-2-[5-amino-1-(5-phospho-beta-D-ribosyl)imidazole-4-carboxamido]succinate + ADP + phosphate + 2 H(+). It functions in the pathway purine metabolism; IMP biosynthesis via de novo pathway; 5-amino-1-(5-phospho-D-ribosyl)imidazole-4-carboxamide from 5-amino-1-(5-phospho-D-ribosyl)imidazole-4-carboxylate: step 1/2. In Shewanella sp. (strain ANA-3), this protein is Phosphoribosylaminoimidazole-succinocarboxamide synthase.